Consider the following 52-residue polypeptide: Ovomucoid (52 aa).

The 51-residue stretch at 2-52 folds into the Kazal-like domain; the sequence is VDCSDYPKPVCTLEEMPLCGSDNKTYGNKCNFCNAVVDSNGTLTLSHFGKC. 3 disulfides stabilise this stretch: Cys-4-Cys-34, Cys-12-Cys-31, and Cys-20-Cys-52. Asn-41 carries N-linked (GlcNAc...) asparagine glycosylation.

It localises to the secreted. This is Ovomucoid from Scythrops novaehollandiae (Channel-billed cuckoo).